We begin with the raw amino-acid sequence, 414 residues long: MTDTHYDVVIVGAGHGGAQTAIALRQNGFAGTIAIIGAEPDLPYERPPLSKEYLAAEKGFERILIRPASFWNDRHIAMHLGCAVERVDPTQRLVFLADGRSMGYGDLVWCAGGSARRLDCTGHDLGGVHYVRTRADTDALAAELPGVSKVVIIGGGYIGLEAAAVMAKFGKNVTLIEALDRVLARVAGEPLSRFFEEKHRSRGVDVRLRTKVGCLLGQDGRVTHVELNDADPIPADLVIVGIGIIPAISPLVVAGAKASNGLLVDASGRTSIPHVYALGDCAAHVNSFAPNDIPIRLESVQNANDQAVVVARTICGTAAQYHAVPWFWSSQYDIRLQTVGLTAGYDQTFVRGDPATGSFTVVYGRDGRVIALDCVNATKDYVQGKRLVEAKALIEPGMTDPQYPLKNFMTPSPA.

FAD is bound at residue 7-38 (DVVIVGAGHGGAQTAIALRQNGFAGTIAIIGA). NAD(+) is bound at residue 149–177 (KVVIIGGGYIGLEAAAVMAKFGKNVTLIE).

It belongs to the FAD-dependent oxidoreductase family. As to quaternary structure, monomer. Carbazole 1,9a-dioxygenase complex consists of a terminal oxygenase component CarAa, a ferredoxin reductase component fdr and a ferredoxin component CarAc. FAD serves as cofactor.

It catalyses the reaction 2 reduced [2Fe-2S]-[ferredoxin] + NAD(+) + H(+) = 2 oxidized [2Fe-2S]-[ferredoxin] + NADH. The enzyme catalyses 2 reduced [2Fe-2S]-[ferredoxin] + NADP(+) + H(+) = 2 oxidized [2Fe-2S]-[ferredoxin] + NADPH. Functionally, part of the multicomponent carbazole 1,9a-dioxygenase (CARDO), that converts carbazole (CAR) into 2-aminobiphenyl-2,3-diol. The polypeptide is Ferredoxin--NAD(P)(+) reductase fdr (fdr) (Sphingomonas sp).